Here is a 540-residue protein sequence, read N- to C-terminus: Cystathionine gamma-synthase 1, chloroplastic (540 aa).

The N-terminal 78 residues, 1 to 78 (MAVSSCARAF…RNCSNIGVAQ (78 aa)), are a transit peptide targeting the chloroplast. Pyridoxal 5'-phosphate is bound by residues Tyr-203, Arg-205, Gly-233, Met-234, Tyr-258, Ser-353, and Thr-355. Lys-356 carries the post-translational modification N6-(pyridoxal phosphate)lysine.

It belongs to the trans-sulfuration enzymes family. As to quaternary structure, forms homotetramers composed of 2 homodimers. Pyridoxal 5'-phosphate serves as cofactor.

It is found in the plastid. The protein localises to the chloroplast. The enzyme catalyses O-phospho-L-homoserine + L-cysteine = L,L-cystathionine + phosphate. The catalysed reaction is O-succinyl-L-homoserine + L-cysteine = L,L-cystathionine + succinate + H(+). It functions in the pathway amino-acid biosynthesis; L-methionine biosynthesis via de novo pathway; L-cystathionine from O-succinyl-L-homoserine: step 1/1. Its activity is regulated as follows. Irreversibly inactivated by DL-propargylglycine. Its function is as follows. Catalyzes the first committed step of methionine (Met) biosynthesis. Catalyzes the formation of L-cystathionine from homoserine esters and L-cysteine, via a gamma-replacement reaction. This chain is Cystathionine gamma-synthase 1, chloroplastic, found in Nicotiana tabacum (Common tobacco).